The sequence spans 358 residues: DNA primase large subunit PriL (358 aa).

Positions 234, 306, 315, and 322 each coordinate [4Fe-4S] cluster. A disordered region spans residues 335–358 (KLDDTDEEELVDWREDEGEEEADA). Over residues 338-358 (DTDEEELVDWREDEGEEEADA) the composition is skewed to acidic residues.

Belongs to the eukaryotic-type primase large subunit family. In terms of assembly, heterodimer of a small subunit (PriS) and a large subunit (PriL). Requires [4Fe-4S] cluster as cofactor.

Its function is as follows. Regulatory subunit of DNA primase, an RNA polymerase that catalyzes the synthesis of short RNA molecules used as primers for DNA polymerase during DNA replication. Stabilizes and modulates the activity of the small subunit, increasing the rate of DNA synthesis, and conferring RNA synthesis capability. The DNA polymerase activity may enable DNA primase to also catalyze primer extension after primer synthesis. May also play a role in DNA repair. In Haloarcula marismortui (strain ATCC 43049 / DSM 3752 / JCM 8966 / VKM B-1809) (Halobacterium marismortui), this protein is DNA primase large subunit PriL.